The primary structure comprises 65 residues: uncharacterized protein (65 aa).

This is an uncharacterized protein from Invertebrate iridescent virus 6 (IIV-6).